Consider the following 455-residue polypeptide: Protein 60A (455 aa).

Positions 1–36 (MSGLRNTSEAVAVLASLGLGMVLLMFVATTPPAVEA) are cleaved as a signal peptide. The propeptide occupies 37 to 335 (TQSGIYIDNG…SASHPRKRKK (299 aa)). The segment covering 108-118 (GLSDQDEDDDY) has biased composition (acidic residues). A disordered region spans residues 108–138 (GLSDQDEDDDYERGHRSRRSADLEEDEGEQQ). Residues N238 and N250 are each glycosylated (N-linked (GlcNAc...) asparagine). Positions 316 to 345 (AHSSHHRSKRSASHPRKRKKSVSPNNVPLL) are disordered. Residues 318–336 (SSHHRSKRSASHPRKRKKS) show a composition bias toward basic residues. Disulfide bonds link C354-C420, C383-C452, and C387-C454. An N-linked (GlcNAc...) asparagine glycan is attached at N396.

The protein belongs to the TGF-beta family. As to quaternary structure, homodimer; disulfide-linked. Interacts with nord and dpp. As to expression, expressed in cells of the developing foregut and hindgut during germ band retraction and later embryonic stages. Expressed in the wing disk, mainly in the posterior compartment in the pteropleural and medial regions extending into the progenitors of the scutellum. High levels are found within the posterior and anterior compartments of the wing pouch and low levels in the hinge region. In the eye/antennal disk, expression is highest anterior to the morphogenetic furrow and in the medial regions with lower levels of expression posterior to the morphogenetic furrow. Expressed throughout the posterior compartment of the leg imaginal disks and within the ventral anterior compartment.

The protein resides in the secreted. Its function is as follows. Required for the growth of imaginal tissues and for patterning of the adult wing. In Drosophila melanogaster (Fruit fly), this protein is Protein 60A (gbb).